Here is a 367-residue protein sequence, read N- to C-terminus: MAGNSIGQAFKVTTCGESHGAGLMAIVDGVPSGLPLTSEDLQLDLDRRKPGTSKFATQRREPDEVEIISGVFEGKTTGTSIGLLIRNTNQKSKDYSDIKDTFRPGHADYTYSMKYGFRDYRGGGRSSARETAMRVAAGAIAKKYLKQRLGIEIHGHVVLMGNEAAAVTDPNQIDWQFVNSNPFFCADPDALPRFEALIERLRKEGTSCGAKLEVIASGVPVGLGEPVFDRLDADIAHAMMSINAVKGVEIGDGMRVAEQFGHIARDELTPDGFTANHSGGILGGISSGQDIKVSIALKPTSSITTPGKSIDQQGQPVDMLTKGRHDPCVGVRATPIAEAMLAIVLLDHYLRHRGQNADVTQPVAPIA.

R48 serves as a coordination point for NADP(+). FMN contacts are provided by residues 125-127, 243-244, G283, 298-302, and R324; these read RSS, NA, and KPTSS.

Belongs to the chorismate synthase family. In terms of assembly, homotetramer. FMNH2 is required as a cofactor.

The catalysed reaction is 5-O-(1-carboxyvinyl)-3-phosphoshikimate = chorismate + phosphate. Its pathway is metabolic intermediate biosynthesis; chorismate biosynthesis; chorismate from D-erythrose 4-phosphate and phosphoenolpyruvate: step 7/7. In terms of biological role, catalyzes the anti-1,4-elimination of the C-3 phosphate and the C-6 proR hydrogen from 5-enolpyruvylshikimate-3-phosphate (EPSP) to yield chorismate, which is the branch point compound that serves as the starting substrate for the three terminal pathways of aromatic amino acid biosynthesis. This reaction introduces a second double bond into the aromatic ring system. The polypeptide is Chorismate synthase (Psychrobacter sp. (strain PRwf-1)).